A 164-amino-acid polypeptide reads, in one-letter code: Transmembrane protein B169L (164 aa).

Transmembrane regions (helical) follow at residues 28-48 and 60-80; these read NPFI…FAIC and TAIY…YVLN. Asn-88 is a glycosylation site (N-linked (GlcNAc...) asparagine; by host). Residues 114–142 are disordered; the sequence is SPPSVPDELEEDRPKMIPAGSKPADFKPA.

It belongs to the asfivirus B169L family.

It is found in the host membrane. The protein resides in the virion. The sequence is that of Transmembrane protein B169L from Ornithodoros (relapsing fever ticks).